A 288-amino-acid chain; its full sequence is Energy-coupling factor transporter ATP-binding protein EcfA2 (288 aa).

The 244-residue stretch at 3 to 246 (IKLEQLGYCY…PDELVDLGLS (244 aa)) folds into the ABC transporter domain. ATP is bound at residue 40 to 47 (GHTGSGKS).

It belongs to the ABC transporter superfamily. Energy-coupling factor EcfA family. Forms a stable energy-coupling factor (ECF) transporter complex composed of 2 membrane-embedded substrate-binding proteins (S component), 2 ATP-binding proteins (A component) and 2 transmembrane proteins (T component).

It localises to the cell membrane. In terms of biological role, ATP-binding (A) component of a common energy-coupling factor (ECF) ABC-transporter complex. Unlike classic ABC transporters this ECF transporter provides the energy necessary to transport a number of different substrates. The polypeptide is Energy-coupling factor transporter ATP-binding protein EcfA2 (Listeria monocytogenes serotype 4b (strain F2365)).